An 889-amino-acid chain; its full sequence is Envelope glycoprotein gp160 (889 aa).

The first 22 residues, 1 to 22 (MGCLGNQLLIALLLLSASGIYC), serve as a signal peptide directing secretion. The Extracellular segment spans residues 23–704 (VQYVTVFYGI…TSWIKYIQYG (682 aa)). N-linked (GlcNAc...) asparagine; by host glycosylation occurs at asparagine 37. Cysteine 44 and cysteine 57 are joined by a disulfide. N-linked (GlcNAc...) asparagine; by host glycosylation is found at asparagine 70 and asparagine 114. Cystine bridges form between cysteine 101/cysteine 226, cysteine 108/cysteine 217, cysteine 113/cysteine 175, cysteine 239/cysteine 269, and cysteine 249/cysteine 261. A V1 region spans residues 113 to 174 (CNKSETDRWG…TGLEQEPMVS (62 aa)). The tract at residues 120-145 (RWGLTGTPAPTTTQTTTTQASTTPTS) is disordered. The span at 126 to 145 (TPAPTTTQTTTTQASTTPTS) shows a compositional bias: low complexity. Asparagine 153, asparagine 163, asparagine 178, asparagine 191, asparagine 206, asparagine 218, asparagine 250, asparagine 253, asparagine 260, asparagine 284, asparagine 290, asparagine 301, asparagine 312, asparagine 322, asparagine 377, asparagine 422, asparagine 470, asparagine 486, and asparagine 489 each carry an N-linked (GlcNAc...) asparagine; by host glycan. Positions 175–217 (CKFNMTGLKRDKKREYNETWYSRDLVCEQNSNETDSKCYMNHC) are V2. The interval 317 to 349 (CRRPGNKTVLPVTIMSGLVFHSQPINERPKQAW) is V3. A disulfide bridge links cysteine 317 with cysteine 350. Cystine bridges form between cysteine 401–cysteine 469 and cysteine 408–cysteine 442. A V4 region spans residues 408 to 442 (CKMNWFLNWVENIQNGSRWTSQNQKERQRRNYVPC). A V5 region spans residues 485-492 (GNETNITM). Residues 536-556 (GVFVLGFLGFLATAGSAMSAA) are fusion peptide. The tract at residues 599-615 (LQTRVTAIEKYLKDQAQ) is immunosuppression. Residues asparagine 635, asparagine 644, and asparagine 660 are each glycosylated (N-linked (GlcNAc...) asparagine; by host). A coiled-coil region spans residues 648–675 (QEWEKQVNFLEANITQSLEEAQIQQEKN). An MPER; binding to GalCer region spans residues 681-702 (KLNSWDIFGNWFDLTSWIKYIQ). A helical transmembrane segment spans residues 705-725 (VLIVLGVIGLRIVIYVVQMLA). The Cytoplasmic portion of the chain corresponds to 726–889 (RLRQGYRPVF…IRQGLELTLL (164 aa)). Residues 731–734 (YRPV) carry the YXXV motif; contains endocytosis signal motif. Cysteine 797 is lipidated: S-palmitoyl cysteine; by host. The Di-leucine internalization motif signature appears at 888–889 (LL).

The mature envelope protein (Env) consists of a homotrimer of non-covalently associated gp120-gp41 heterodimers. The resulting complex protrudes from the virus surface as a spike. Interacts with host CD4 and CCR5. Gp120 also interacts with the C-type lectins CD209/DC-SIGN and CLEC4M/DC-SIGNR (collectively referred to as DC-SIGN(R)). As to quaternary structure, the mature envelope protein (Env) consists of a homotrimer of non-covalently associated gp120-gp41 heterodimers. The resulting complex protrudes from the virus surface as a spike. In terms of processing, specific enzymatic cleavages in vivo yield mature proteins. Envelope glycoproteins are synthesized as an inactive precursor that is heavily N-glycosylated and processed likely by host cell furin in the Golgi to yield the mature SU and TM proteins. The cleavage site between SU and TM requires the minimal sequence [KR]-X-[KR]-R. Post-translationally, palmitoylation of the transmembrane protein and of Env polyprotein (prior to its proteolytic cleavage) is essential for their association with host cell membrane lipid rafts. Palmitoylation is therefore required for envelope trafficking to classical lipid rafts, but not for viral replication.

It is found in the virion membrane. The protein resides in the host cell membrane. It localises to the host endosome membrane. The surface protein gp120 (SU) attaches the virus to the host lymphoid cell by binding to the primary receptor CD4. This interaction induces a structural rearrangement creating a high affinity binding site for a chemokine coreceptor like CCR5. This peculiar 2 stage receptor-interaction strategy allows gp120 to maintain the highly conserved coreceptor-binding site in a cryptic conformation, protected from neutralizing antibodies. These changes are transmitted to the transmembrane protein gp41 and are thought to activate its fusogenic potential by unmasking its fusion peptide. Functionally, surface protein gp120 (SU) may target the virus to gut-associated lymphoid tissue (GALT) by binding host ITGA4/ITGB7 (alpha-4/beta-7 integrins), a complex that mediates T-cell migration to the GALT. Interaction between gp120 and ITGA4/ITGB7 would allow the virus to enter GALT early in the infection, infecting and killing most of GALT's resting CD4+ T-cells. This T-cell depletion is believed to be the major insult to the host immune system leading to AIDS. Its function is as follows. The surface protein gp120 is a ligand for CD209/DC-SIGN and CLEC4M/DC-SIGNR, which are respectively found on dendritic cells (DCs), and on endothelial cells of liver sinusoids and lymph node sinuses. These interactions allow capture of viral particles at mucosal surfaces by these cells and subsequent transmission to permissive cells. DCs are professional antigen presenting cells, critical for host immunity by inducing specific immune responses against a broad variety of pathogens. They act as sentinels in various tissues where they take up antigen, process it, and present it to T-cells following migration to lymphoid organs. SIV subverts the migration properties of dendritic cells to gain access to CD4+ T-cells in lymph nodes. Virus transmission to permissive T-cells occurs either in trans (without DCs infection, through viral capture and transmission), or in cis (following DCs productive infection, through the usual CD4-gp120 interaction), thereby inducing a robust infection. In trans infection, bound virions remain infectious over days and it is proposed that they are not degraded, but protected in non-lysosomal acidic organelles within the DCs close to the cell membrane thus contributing to the viral infectious potential during DCs' migration from the periphery to the lymphoid tissues. On arrival at lymphoid tissues, intact virions recycle back to DCs' cell surface allowing virus transmission to CD4+ T-cells. Virion capture also seems to lead to MHC-II-restricted viral antigen presentation, and probably to the activation of SIV-specific CD4+ cells. In terms of biological role, the transmembrane protein gp41 (TM) acts as a class I viral fusion protein. Under the current model, the protein has at least 3 conformational states: pre-fusion native state, pre-hairpin intermediate state, and post-fusion hairpin state. During fusion of viral and target intracellular membranes, the coiled coil regions (heptad repeats) assume a trimer-of-hairpins structure, positioning the fusion peptide in close proximity to the C-terminal region of the ectodomain. The formation of this structure appears to drive apposition and subsequent fusion of viral and target cell membranes. Complete fusion occurs in host cell endosomes. The virus undergoes clathrin-dependent internalization long before endosomal fusion, thus minimizing the surface exposure of conserved viral epitopes during fusion and reducing the efficacy of inhibitors targeting these epitopes. Membranes fusion leads to delivery of the nucleocapsid into the cytoplasm. The envelope glycoprotein gp160 precursor down-modulates cell surface CD4 antigen by interacting with it in the endoplasmic reticulum and blocking its transport to the cell surface. Functionally, the gp120-gp41 heterodimer allows rapid transcytosis of the virus through CD4 negative cells such as simple epithelial monolayers of the intestinal, rectal and endocervical epithelial barriers. Both gp120 and gp41 specifically recognize glycosphingolipids galactosyl-ceramide (GalCer) or 3' sulfo-galactosyl-ceramide (GalS) present in the lipid rafts structures of epithelial cells. Binding to these alternative receptors allows the rapid transcytosis of the virus through the epithelial cells. This transcytotic vesicle-mediated transport of virions from the apical side to the basolateral side of the epithelial cells does not involve infection of the cells themselves. In Simian immunodeficiency virus (isolate PBj14/BCL-3) (SIV-sm), this protein is Envelope glycoprotein gp160 (env).